The following is a 340-amino-acid chain: Glycerol-3-phosphate dehydrogenase [NAD(P)+] (340 aa).

NADPH contacts are provided by Ser-11, Trp-12, Arg-33, and Lys-106. Sn-glycerol 3-phosphate-binding residues include Lys-106, Gly-137, and Ser-139. Ala-141 is an NADPH binding site. Residues Lys-192, Asp-245, Ser-255, Arg-256, and Asn-257 each coordinate sn-glycerol 3-phosphate. The Proton acceptor role is filled by Lys-192. NADPH is bound at residue Arg-256. Residues Val-280 and Glu-282 each coordinate NADPH.

The protein belongs to the NAD-dependent glycerol-3-phosphate dehydrogenase family.

It is found in the cytoplasm. It catalyses the reaction sn-glycerol 3-phosphate + NAD(+) = dihydroxyacetone phosphate + NADH + H(+). The enzyme catalyses sn-glycerol 3-phosphate + NADP(+) = dihydroxyacetone phosphate + NADPH + H(+). The protein operates within membrane lipid metabolism; glycerophospholipid metabolism. Catalyzes the reduction of the glycolytic intermediate dihydroxyacetone phosphate (DHAP) to sn-glycerol 3-phosphate (G3P), the key precursor for phospholipid synthesis. The chain is Glycerol-3-phosphate dehydrogenase [NAD(P)+] from Bacillus cereus (strain ATCC 10987 / NRS 248).